The following is an 880-amino-acid chain: A-adding tRNA nucleotidyltransferase (880 aa).

2 CBS domains span residues 315 to 373 and 377 to 435; these read MSSP…NLPV and MHTE…RNAE. 487-490 lines the ATP pocket; the sequence is GFVR. Mg(2+)-binding residues include Asp500 and Asp502. ATP contacts are provided by residues 574–575, Asn579, 619–628, Arg632, and Arg661; these read RD and DPTRVFRAIR.

It belongs to the tRNA nucleotidyltransferase/poly(A) polymerase family. Mg(2+) is required as a cofactor.

The enzyme catalyses a tRNA with a 3' CC end + ATP = a tRNA with a 3' CCA end + diphosphate. TRNA nucleotidyltransferase involved in the synthesis of the tRNA CCA terminus. Adds the terminal adenosine residue to tRNA. The chain is A-adding tRNA nucleotidyltransferase from Geobacter sulfurreducens (strain ATCC 51573 / DSM 12127 / PCA).